Here is a 125-residue protein sequence, read N- to C-terminus: Histone H1-like protein HC1 (125 aa).

Belongs to the histone H1/H5 family. HCT subfamily.

Its function is as follows. Might have a role analogous to that of eukaryotic histone proteins. This is Histone H1-like protein HC1 (hctA) from Chlamydia muridarum (strain MoPn / Nigg).